A 156-amino-acid polypeptide reads, in one-letter code: ATP synthase subunit b (156 aa).

A helical membrane pass occupies residues 7–29; sequence LIGQSITFIFFVWFSMKFVWPPI.

The protein belongs to the ATPase B chain family. F-type ATPases have 2 components, F(1) - the catalytic core - and F(0) - the membrane proton channel. F(1) has five subunits: alpha(3), beta(3), gamma(1), delta(1), epsilon(1). F(0) has three main subunits: a(1), b(2) and c(10-14). The alpha and beta chains form an alternating ring which encloses part of the gamma chain. F(1) is attached to F(0) by a central stalk formed by the gamma and epsilon chains, while a peripheral stalk is formed by the delta and b chains.

Its subcellular location is the cell inner membrane. Functionally, f(1)F(0) ATP synthase produces ATP from ADP in the presence of a proton or sodium gradient. F-type ATPases consist of two structural domains, F(1) containing the extramembraneous catalytic core and F(0) containing the membrane proton channel, linked together by a central stalk and a peripheral stalk. During catalysis, ATP synthesis in the catalytic domain of F(1) is coupled via a rotary mechanism of the central stalk subunits to proton translocation. Its function is as follows. Component of the F(0) channel, it forms part of the peripheral stalk, linking F(1) to F(0). The protein is ATP synthase subunit b of Thiobacillus denitrificans (strain ATCC 25259 / T1).